The chain runs to 512 residues: Cytochrome P450 monooxygenase TwmD (512 aa).

C454 lines the heme pocket.

Belongs to the cytochrome P450 family. It depends on heme as a cofactor.

It functions in the pathway secondary metabolite biosynthesis. Cytochrome P450 monooxygenase; part of the gene cluster that mediates the biosynthesis of wortmanamides A and B, reduced long-chain polyketides amidated with a specific omega-amino acid, 5-aminopentanoic acid (5PA). The PKS modules of TwmB are involved in the synthesis of the polyketide backbone, whereas the non-canonical C domain of TwmB is a bonafide condensation domain that specifically selects 5PA and catalyzes amidation to release polyketide chain. The C domain clearly prefers C16 and C18 fatty acyl substrates, which is consistent with simultaneous formation of both octaketide and nonaketide acyl amides wortmanamides A and B. Because TwmB lacks a designated enoylreductase (ER) domain, the required activity is provided the enoyl reductase TwmE. The roles of the remaining enzymes have still to be clarified. The sequence is that of Cytochrome P450 monooxygenase TwmD from Talaromyces wortmannii (Penicillium wortmannii).